Reading from the N-terminus, the 339-residue chain is DNA-directed RNA polymerase subunit alpha (339 aa).

Residues 1 to 233 (MVREEVAGST…DLFLPFLHAE (233 aa)) are alpha N-terminal domain (alpha-NTD). Residues 264–339 (KKGIPLNCIF…IDLLKNKLSF (76 aa)) are alpha C-terminal domain (alpha-CTD).

This sequence belongs to the RNA polymerase alpha chain family. As to quaternary structure, in plastids the minimal PEP RNA polymerase catalytic core is composed of four subunits: alpha, beta, beta', and beta''. When a (nuclear-encoded) sigma factor is associated with the core the holoenzyme is formed, which can initiate transcription.

It localises to the plastid. It is found in the chloroplast. It carries out the reaction RNA(n) + a ribonucleoside 5'-triphosphate = RNA(n+1) + diphosphate. Its function is as follows. DNA-dependent RNA polymerase catalyzes the transcription of DNA into RNA using the four ribonucleoside triphosphates as substrates. In Bromus inermis (Smooth brome grass), this protein is DNA-directed RNA polymerase subunit alpha.